The primary structure comprises 156 residues: Putative pre-16S rRNA nuclease (156 aa).

It belongs to the YqgF nuclease family.

The protein localises to the cytoplasm. Functionally, could be a nuclease involved in processing of the 5'-end of pre-16S rRNA. This chain is Putative pre-16S rRNA nuclease, found in Rickettsia typhi (strain ATCC VR-144 / Wilmington).